A 151-amino-acid polypeptide reads, in one-letter code: Flavodoxin YqcA (151 aa).

A Flavodoxin-like domain is found at 4–145 (IGIFVGTVYG…ISCPWVEAWA (142 aa)). FMN contacts are provided by residues 10-15 (TVYGNA) and 99-101 (NFC).

Belongs to the flavodoxin family. MioC subfamily. As to quaternary structure, monomer. It depends on FMN as a cofactor.

Probable electron transporter. The sequence is that of Flavodoxin YqcA from Pectobacterium carotovorum subsp. carotovorum (Erwinia carotovora subsp. carotovora).